The following is a 104-amino-acid chain: Seminal ribonuclease (104 aa).

Disulfide bonds link Cys-12-Cys-70, Cys-26-Cys-81, Cys-44-Cys-96, and Cys-51-Cys-58. Substrate is bound by residues 27–31 (KPVNT), Lys-52, and Arg-71.

This sequence belongs to the pancreatic ribonuclease family. Homodimer; disulfide-linked.

It localises to the secreted. It carries out the reaction an [RNA] containing cytidine + H2O = an [RNA]-3'-cytidine-3'-phosphate + a 5'-hydroxy-ribonucleotide-3'-[RNA].. The enzyme catalyses an [RNA] containing uridine + H2O = an [RNA]-3'-uridine-3'-phosphate + a 5'-hydroxy-ribonucleotide-3'-[RNA].. The protein is Seminal ribonuclease (SRN) of Saiga tatarica (Saiga antelope).